A 580-amino-acid chain; its full sequence is Amino-acid acetyltransferase, mitochondrial (580 aa).

Positions 403-560 (LTMQNLFDDK…KLRHQNGVVD (158 aa)) constitute an N-acetyltransferase domain.

Belongs to the acetyltransferase family.

Its subcellular location is the mitochondrion. It catalyses the reaction L-glutamate + acetyl-CoA = N-acetyl-L-glutamate + CoA + H(+). It participates in amino-acid biosynthesis; L-arginine biosynthesis; N(2)-acetyl-L-ornithine from L-glutamate: step 1/4. Its function is as follows. N-acetylglutamate synthase involved in arginine biosynthesis. This chain is Amino-acid acetyltransferase, mitochondrial (ARG2), found in Candida albicans (strain SC5314 / ATCC MYA-2876) (Yeast).